Consider the following 140-residue polypeptide: Oocyte-expressed protein homolog (140 aa).

In terms of domain architecture, KH; atypical spans 40 to 101 (PLVFFLEAWL…AVQRQVKSVL (62 aa)).

Belongs to the KHDC1 family. In terms of assembly, component of the subcortical maternal complex (SCMC), at least composed of NLRP5, KHDC3, OOEP, and TLE6. Within the complex, interacts with NLRP5, KHDC3 and TLE6. As part of the SCMC interacts with the SCMC-associated protein NLRP4F. The SCMC may facilitate translocation of its components between the nuclear and cytoplasmic compartments. Forms a scaffold complex with KHDC3/FILIA, and interacts with BLM and TRIM25 at DNA replication forks.

Its subcellular location is the cytoplasm. The protein resides in the nucleus. In terms of biological role, component of the subcortical maternal complex (SCMC), a multiprotein complex that plays a key role in early embryonic development. The SCMC complex is a structural constituent of cytoplasmic lattices, which consist in fibrous structures found in the cytoplasm of oocytes and preimplantation embryos. They are required to store maternal proteins critical for embryonic development, such as proteins that control epigenetic reprogramming of the preimplantation embryo, and prevent their degradation or activation. As part of the OOEP-KHDC3 scaffold, recruits BLM and TRIM25 to DNA replication forks, thereby promoting the ubiquitination of BLM by TRIM25, enhancing BLM retainment at replication forks and therefore promoting stalled replication fork restart. Positively regulates the homologous recombination-mediated DNA double-strand break (DSB) repair pathway by regulating ATM activation and RAD51 recruitment to DSBs in oocytes. Thereby contributes to oocyte survival and the resumption and completion of meiosis. The chain is Oocyte-expressed protein homolog (OOEP) from Bos taurus (Bovine).